We begin with the raw amino-acid sequence, 803 residues long: Elongation factor G, mitochondrial (803 aa).

A mitochondrion-targeting transit peptide spans 1–24 (MVRPAQVRAFSGLARSATSTRLIP). A tr-type G domain is found at 102-388 (SKVRNIGIAA…GVCDYLPNPS (287 aa)). GTP-binding positions include 111–118 (AHIDSGKT), 186–190 (DTPGH), and 240–243 (NKMD).

The protein belongs to the TRAFAC class translation factor GTPase superfamily. Classic translation factor GTPase family. EF-G/EF-2 subfamily.

It is found in the mitochondrion. It participates in protein biosynthesis; polypeptide chain elongation. Its function is as follows. Mitochondrial GTPase that catalyzes the GTP-dependent ribosomal translocation step during translation elongation. During this step, the ribosome changes from the pre-translocational (PRE) to the post-translocational (POST) state as the newly formed A-site-bound peptidyl-tRNA and P-site-bound deacylated tRNA move to the P and E sites, respectively. Catalyzes the coordinated movement of the two tRNA molecules, the mRNA and conformational changes in the ribosome. This Talaromyces marneffei (strain ATCC 18224 / CBS 334.59 / QM 7333) (Penicillium marneffei) protein is Elongation factor G, mitochondrial (mef1).